The chain runs to 196 residues: ATP-dependent Clp protease proteolytic subunit (196 aa).

The Nucleophile role is filled by S98. Residue H123 is part of the active site.

It belongs to the peptidase S14 family. As to quaternary structure, fourteen ClpP subunits assemble into 2 heptameric rings which stack back to back to give a disk-like structure with a central cavity, resembling the structure of eukaryotic proteasomes.

The protein resides in the cytoplasm. It catalyses the reaction Hydrolysis of proteins to small peptides in the presence of ATP and magnesium. alpha-casein is the usual test substrate. In the absence of ATP, only oligopeptides shorter than five residues are hydrolyzed (such as succinyl-Leu-Tyr-|-NHMec, and Leu-Tyr-Leu-|-Tyr-Trp, in which cleavage of the -Tyr-|-Leu- and -Tyr-|-Trp bonds also occurs).. Its function is as follows. Cleaves peptides in various proteins in a process that requires ATP hydrolysis. Has a chymotrypsin-like activity. Plays a major role in the degradation of misfolded proteins. The chain is ATP-dependent Clp protease proteolytic subunit from Geobacillus sp. (strain WCH70).